A 331-amino-acid chain; its full sequence is Thiamine-monophosphate kinase (331 aa).

Residues aspartate 43, threonine 59, threonine 60, and aspartate 61 each coordinate Mg(2+). Substrate is bound at residue histidine 68. Positions 90, 138, and 231 each coordinate Mg(2+). 137–138 provides a ligand contact to ATP; the sequence is GD. Serine 233 provides a ligand contact to ATP. Position 234 (aspartate 234) interacts with Mg(2+). Substrate contacts are provided by glutamate 284 and tryptophan 328.

This sequence belongs to the thiamine-monophosphate kinase family.

The catalysed reaction is thiamine phosphate + ATP = thiamine diphosphate + ADP. The protein operates within cofactor biosynthesis; thiamine diphosphate biosynthesis; thiamine diphosphate from thiamine phosphate: step 1/1. Its function is as follows. Catalyzes the ATP-dependent phosphorylation of thiamine-monophosphate (TMP) to form thiamine-pyrophosphate (TPP), the active form of vitamin B1. This chain is Thiamine-monophosphate kinase, found in Corynebacterium glutamicum (strain ATCC 13032 / DSM 20300 / JCM 1318 / BCRC 11384 / CCUG 27702 / LMG 3730 / NBRC 12168 / NCIMB 10025 / NRRL B-2784 / 534).